A 324-amino-acid chain; its full sequence is Appendage-associated protein (324 aa).

A signal peptide spans 1–32 (MGCPVSRGGSPGCGRRIAEELRLAEDARLRLA). Residues 195–255 (IAQAKEIAQA…AADKLQALGK (61 aa)) are a coiled coil.

The protein resides in the secreted. In terms of biological role, associates with actin filament appendages that are formed in the inclusion appendages of the parasitophorous vacuole during infection of the host erythrocyte. The sequence is that of Appendage-associated protein (aaaP1) from Anaplasma marginale (strain Florida).